The sequence spans 124 residues: Small ribosomal subunit protein uS12 (124 aa).

Positions 1-32 are disordered; sequence MPTISQLIRHGRQKQKKRTKSPALKSSPQRRG. The span at 9 to 20 shows a compositional bias: basic residues; sequence RHGRQKQKKRTK. 3-methylthioaspartic acid is present on Asp-89.

The protein belongs to the universal ribosomal protein uS12 family. As to quaternary structure, part of the 30S ribosomal subunit. Contacts proteins S8 and S17. May interact with IF1 in the 30S initiation complex.

Functionally, with S4 and S5 plays an important role in translational accuracy. In terms of biological role, interacts with and stabilizes bases of the 16S rRNA that are involved in tRNA selection in the A site and with the mRNA backbone. Located at the interface of the 30S and 50S subunits, it traverses the body of the 30S subunit contacting proteins on the other side and probably holding the rRNA structure together. The combined cluster of proteins S8, S12 and S17 appears to hold together the shoulder and platform of the 30S subunit. This Leptospira borgpetersenii serovar Hardjo-bovis (strain JB197) protein is Small ribosomal subunit protein uS12.